Consider the following 239-residue polypeptide: Ribosomal RNA large subunit methyltransferase E (239 aa).

The tract at residues 1–20 (MTKAPIAGNRTGRKLGQRVK) is disordered. Residues 11–20 (TGRKLGQRVK) are compositionally biased toward basic residues. S-adenosyl-L-methionine contacts are provided by Gly-81, Trp-83, Asp-104, Asp-120, and Asp-144. Residue Lys-184 is the Proton acceptor of the active site.

The protein belongs to the class I-like SAM-binding methyltransferase superfamily. RNA methyltransferase RlmE family.

It is found in the cytoplasm. It catalyses the reaction uridine(2552) in 23S rRNA + S-adenosyl-L-methionine = 2'-O-methyluridine(2552) in 23S rRNA + S-adenosyl-L-homocysteine + H(+). Specifically methylates the uridine in position 2552 of 23S rRNA at the 2'-O position of the ribose in the fully assembled 50S ribosomal subunit. In Rhizobium etli (strain ATCC 51251 / DSM 11541 / JCM 21823 / NBRC 15573 / CFN 42), this protein is Ribosomal RNA large subunit methyltransferase E.